Here is a 98-residue protein sequence, read N- to C-terminus: NADH-ubiquinone oxidoreductase chain 4L (98 aa).

The next 3 helical transmembrane spans lie at 2–22 (QMTM…LLMF), 26–46 (FMSS…LMSI), and 59–79 (FPLV…SLLV).

Belongs to the complex I subunit 4L family. Core subunit of respiratory chain NADH dehydrogenase (Complex I) which is composed of 45 different subunits.

Its subcellular location is the mitochondrion inner membrane. The catalysed reaction is a ubiquinone + NADH + 5 H(+)(in) = a ubiquinol + NAD(+) + 4 H(+)(out). Functionally, core subunit of the mitochondrial membrane respiratory chain NADH dehydrogenase (Complex I) which catalyzes electron transfer from NADH through the respiratory chain, using ubiquinone as an electron acceptor. Part of the enzyme membrane arm which is embedded in the lipid bilayer and involved in proton translocation. This Echinosorex gymnura (Moon rat) protein is NADH-ubiquinone oxidoreductase chain 4L (MT-ND4L).